Consider the following 54-residue polypeptide: Large ribosomal subunit protein bL33 (54 aa).

Belongs to the bacterial ribosomal protein bL33 family.

This Legionella pneumophila (strain Lens) protein is Large ribosomal subunit protein bL33.